A 298-amino-acid chain; its full sequence is Phosphatidylglycerol--prolipoprotein diacylglyceryl transferase (298 aa).

3 helical membrane passes run 17–37, 59–79, and 97–117; these read LAVR…IVVG, MMFY…VLFY, and GGMS…LFAW. An a 1,2-diacyl-sn-glycero-3-phospho-(1'-sn-glycerol)-binding site is contributed by Arg142. Helical transmembrane passes span 230–250 and 257–277; these read MGAI…TVEF and FLGL…PMIV.

The protein belongs to the Lgt family.

It is found in the cell inner membrane. It catalyses the reaction L-cysteinyl-[prolipoprotein] + a 1,2-diacyl-sn-glycero-3-phospho-(1'-sn-glycerol) = an S-1,2-diacyl-sn-glyceryl-L-cysteinyl-[prolipoprotein] + sn-glycerol 1-phosphate + H(+). It functions in the pathway protein modification; lipoprotein biosynthesis (diacylglyceryl transfer). In terms of biological role, catalyzes the transfer of the diacylglyceryl group from phosphatidylglycerol to the sulfhydryl group of the N-terminal cysteine of a prolipoprotein, the first step in the formation of mature lipoproteins. This is Phosphatidylglycerol--prolipoprotein diacylglyceryl transferase from Burkholderia cenocepacia (strain ATCC BAA-245 / DSM 16553 / LMG 16656 / NCTC 13227 / J2315 / CF5610) (Burkholderia cepacia (strain J2315)).